The primary structure comprises 201 residues: Dephospho-CoA kinase (201 aa).

The DPCK domain maps to 6 to 201; it reads VMGLTGSIGM…RAIREKNPRG (196 aa). 14–19 serves as a coordination point for ATP; the sequence is GMGKSA.

This sequence belongs to the CoaE family.

The protein localises to the cytoplasm. The catalysed reaction is 3'-dephospho-CoA + ATP = ADP + CoA + H(+). It participates in cofactor biosynthesis; coenzyme A biosynthesis; CoA from (R)-pantothenate: step 5/5. Its function is as follows. Catalyzes the phosphorylation of the 3'-hydroxyl group of dephosphocoenzyme A to form coenzyme A. The sequence is that of Dephospho-CoA kinase from Novosphingobium aromaticivorans (strain ATCC 700278 / DSM 12444 / CCUG 56034 / CIP 105152 / NBRC 16084 / F199).